A 589-amino-acid polypeptide reads, in one-letter code: ABC transporter G family member 8 (589 aa).

The ABC transporter domain occupies 16–261 (LTTSSISYTI…LLFKGFTVPP (246 aa)). 62 to 69 (GPSGAGKS) is an ATP binding site. One can recognise an ABC transmembrane type-2 domain in the interval 311–521 (TEISLLARRF…ALDALLINEY (211 aa)). A run of 7 helical transmembrane segments spans residues 335 to 355 (ALEALVVGLVLGTIYINIGIG), 365 to 385 (MFAFTLTFLLSSTTETLPIFI), 412 to 432 (VFLPYLFVISIIYSVSVYFLI), 441 to 461 (FGYFVLVIWIILLMANSFVLF), 470 to 490 (ITGTSLVTILLAAFFLFSGYF), 499 to 519 (YWLFMYFFSMYKYALDALLIN), and 560 to 580 (FNVYVLLGFFVLYRVLCFLAL).

This sequence belongs to the ABC transporter superfamily. ABCG family. Eye pigment precursor importer (TC 3.A.1.204) subfamily.

Its subcellular location is the membrane. This is ABC transporter G family member 8 (ABCG8) from Arabidopsis thaliana (Mouse-ear cress).